Consider the following 371-residue polypeptide: MPHQQMLILFGLLPVATNISTWWNFGSMLLACTSMQVLTGFFLAVHYTANINLAFSSIVHITRDVPYGWMMQNLHAIGASMFFICIYIHIARGLYYGSYLNKKTWLSGTTLLIMLMATAFFGYVLPWGQMSFWAATVITNLLTAIPYLGTTMTTWLWGGFAINDPTLTRFSALHFILSFGIISLLSLHIMLLHEDGWSNPLGTNSDIDKIPFHPYQTYKDLLMLSLVILMLLMTVSFLPDIFNDPENFSKANPLVTPQHIKPEWYFLFAYGILRSIPNKLGGALALAMSIMILLTAPFTHTSTIRSMTFRPIMQLMFWTLVATFAVITWSATKPVEPPFTVISQIASTIYFLFLIMNPILGWVENKIMKHS.

4 consecutive transmembrane segments (helical) span residues 25-45 (FGSM…FLAV), 69-90 (WMMQ…YIHI), 105-125 (WLSG…GYVL), and 170-190 (FSAL…LHIM). Positions 75 and 89 each coordinate heme b. His174 and His188 together coordinate heme b. Residue His193 participates in a ubiquinone binding. Helical transmembrane passes span 218–238 (YKDL…VSFL), 280–300 (LGGA…PFTH), 312–332 (IMQL…WSAT), and 339–358 (FTVI…IMNP).

It belongs to the cytochrome b family. In terms of assembly, the cytochrome bc1 complex contains 3 respiratory subunits (MT-CYB, CYC1 and UQCRFS1), 2 core proteins (UQCRC1 and UQCRC2) and probably 6 low-molecular weight proteins. The cofactor is heme b.

The protein localises to the mitochondrion inner membrane. Component of the ubiquinol-cytochrome c reductase complex (complex III or cytochrome b-c1 complex) that is part of the mitochondrial respiratory chain. The b-c1 complex mediates electron transfer from ubiquinol to cytochrome c. Contributes to the generation of a proton gradient across the mitochondrial membrane that is then used for ATP synthesis. This Eryx elegans (Central Asian sand boa) protein is Cytochrome b (MT-CYB).